The sequence spans 89 residues: Envelope glycoprotein N (89 aa).

An N-terminal signal peptide occupies residues 1–24; it reads MAPGRGVLLLICLCLMDNVSQVVC. The Virion surface portion of the chain corresponds to 25-56; sequence SQNSTTPSKFPTFYSYDCNADTYAPQLTSFST. A helical membrane pass occupies residues 57–77; the sequence is IWTLLNVLVMTIACVIYLIYM. Residues 78-89 lie on the Intravirion side of the membrane; the sequence is CFNKFVATMTNT.

Belongs to the herpesviridae glycoprotein N family. In terms of assembly, interacts (via N-terminus) with gM (via N-terminus). The gM-gN heterodimer forms the gCII complex.

The protein localises to the virion membrane. Its subcellular location is the host membrane. It is found in the host Golgi apparatus. It localises to the host trans-Golgi network. Envelope glycoprotein necessary for proper maturation of gM and modulation of its membrane fusion activity. Also plays a critical role in virion morphogenesis. The protein is Envelope glycoprotein N of Equine herpesvirus 2 (strain 86/87) (EHV-2).